The following is a 156-amino-acid chain: Endoribonuclease YbeY (156 aa).

3 residues coordinate Zn(2+): His122, His126, and His132.

Belongs to the endoribonuclease YbeY family. Requires Zn(2+) as cofactor.

The protein resides in the cytoplasm. Single strand-specific metallo-endoribonuclease involved in late-stage 70S ribosome quality control and in maturation of the 3' terminus of the 16S rRNA. The sequence is that of Endoribonuclease YbeY from Moorella thermoacetica (strain ATCC 39073 / JCM 9320).